The primary structure comprises 92 residues: Small ribosomal subunit protein uS19 (92 aa).

The protein belongs to the universal ribosomal protein uS19 family.

In terms of biological role, protein S19 forms a complex with S13 that binds strongly to the 16S ribosomal RNA. This chain is Small ribosomal subunit protein uS19, found in Methylorubrum extorquens (strain CM4 / NCIMB 13688) (Methylobacterium extorquens).